Here is a 336-residue protein sequence, read N- to C-terminus: MASAANSSREQLRKFLNKECLWVLSDASTPQMKVYTATTAVSAVYVPQIAGPPKTYMNVTLIVLKPKKKPTYVTVYINGTLATVARPEVLFTKAVQGPHSLTLMYFGVFSDAVGEAVPVEIRGNPVVTCTDLTTAHVFTTSTAVKTVEELQDITPSEIIPLGRGGAWYAEGALYMFFVNMDMLMCCPNMPTFPSLTHFINLLTRCDNGECVTCYGAGAHVNILRGWTEDDSPGTSGTCPCLLPCTALNNDYVPITGHRALLGLMFKPEDAPFVVGLRFNPPKMHPDMSRVLQGVLANGKEVPCTAQPWTLLRFSDLYSRAMLYNCQVLKRQVLHSY.

The interval 67-69 (KKK) is interaction with host BBLF1.

The protein belongs to the herpesviridae cytoplasmic envelopment protein 2 family. In terms of assembly, homodimer. Interacts with BBLF1. Interacts with the capsid. Interacts with BKRF4 (via C-terminus); this interaction is important for infectious virion production. Interacts with host TYK2; this interaction participates to the inhibition of host type I IFN signaling. Interacts with host STAT1; this interaction leads to STAT1 dephosphorylation and inhibition. Interacts with host STAT2; this interaction leads to STAT2 degradation. Interacts with host CUL1; this interaction might facilitate CUL1 recruitment to STAT2, leading to ubiquitination and degradation of the latter. Interacts with host AGO2; this interaction participates to the host miRNA regulation leading to enhanced SUMOylation.

It is found in the virion tegument. The protein resides in the host cytoplasm. It localises to the host nucleus. The protein localises to the host Golgi apparatus. Its subcellular location is the host trans-Golgi network. Functionally, plays a critical role in cytoplasmic virus egress. Participates in the final step of tegumentation and envelope acquisition within the host cytoplasm by directly interacting with the capsid. Upon virion binding to target cell, a signaling cascade is triggered to disrupt the interaction with the capsid, thereby preparing capsid uncoating. Activates the AP-1 pathway and enhances EBV reactivation and virus release. Inhibits type I IFN-induced TYK2, STAT1 and STAT3 phosphorylation, thereby impairing type I IFN signaling and counteracting the ability of IFN-alpha to suppress the reactivation of EBV. Recruits SHP1 phosphatase to dephosphorylate STAT1. Mediates STAT2 ubiquitination and proteasomal degradation. Also suppresses type II and type III IFN signaling. Contributes to G1/S arrest in the host cell. Acts as an miRNA regulator that interferes with the function of RISC in miRNA-mediated mRNA silencing. As a result, SUMOylation is increased. When encapsulated in the exosomes released by EBV-infected host cells, may facilitate the infection in recipient cells. This chain is Cytoplasmic envelopment protein 2, found in Epstein-Barr virus (strain AG876) (HHV-4).